A 341-amino-acid polypeptide reads, in one-letter code: L-threonine 3-dehydrogenase (341 aa).

A Zn(2+)-binding site is contributed by cysteine 38. Catalysis depends on charge relay system residues threonine 40 and histidine 43. Residues histidine 63, glutamate 64, cysteine 93, cysteine 96, cysteine 99, and cysteine 107 each coordinate Zn(2+). NAD(+) contacts are provided by residues isoleucine 175, aspartate 195, arginine 200, 262–264 (LGI), and 286–287 (IY).

It belongs to the zinc-containing alcohol dehydrogenase family. Homotetramer. Zn(2+) serves as cofactor.

Its subcellular location is the cytoplasm. The catalysed reaction is L-threonine + NAD(+) = (2S)-2-amino-3-oxobutanoate + NADH + H(+). It participates in amino-acid degradation; L-threonine degradation via oxydo-reductase pathway; glycine from L-threonine: step 1/2. In terms of biological role, catalyzes the NAD(+)-dependent oxidation of L-threonine to 2-amino-3-ketobutyrate. The chain is L-threonine 3-dehydrogenase from Colwellia psychrerythraea (strain 34H / ATCC BAA-681) (Vibrio psychroerythus).